The chain runs to 492 residues: Transmembrane protein 39B (492 aa).

Residues Met1–Ser53 are disordered. N-linked (GlcNAc...) asparagine glycosylation occurs at Asn8. Low complexity predominate over residues Ser31–Ser53. The next 8 membrane-spanning stretches (helical) occupy residues Ser77 to Ile97, Thr115 to Gly135, Ser153 to Leu175, Thr185 to Leu205, Glu288 to Val308, Leu322 to Ser342, Ile421 to Met441, and His447 to Leu467.

It belongs to the TMEM39 family.

It is found in the endoplasmic reticulum membrane. Its function is as follows. May protect the cells against DNA damage caused by exposure to the cold-warming stress and facilitates tissue damage repair during the recovery phase. The sequence is that of Transmembrane protein 39B from Mus musculus (Mouse).